Here is a 109-residue protein sequence, read N- to C-terminus: MSYQEQQCKQVCQPPLVCPPRSAQSPVLCQSAPSLVLLQSAQSPIHCQSALSHAHLSHASRNALLCNLLHHASKSAHPRANKGFSSLQNQKKRTESILHKSIATPPSSI.

5 tandem repeats follow at residues 21–29 (RSAQSPVLC), 30–38 (QSAPSLVLL), 39–47 (QSAQSPIHC), 48–56 (QSALSHAHL), and 57–65 (SHASRNALL). Positions 21–65 (RSAQSPVLCQSAPSLVLLQSAQSPIHCQSALSHAHLSHASRNALL) are 5 X 9 AA approximate tandem repeats. Residues 76-109 (AHPRANKGFSSLQNQKKRTESILHKSIATPPSSI) form a disordered region.

It belongs to the cornifin (SPRR) family. As to expression, not expressed in uterus.

Its subcellular location is the cytoplasm. In terms of biological role, cross-linked envelope protein of keratinocytes. It is a keratinocyte protein that first appears in the cell cytosol, but ultimately becomes cross-linked to membrane proteins by transglutaminase. All that results in the formation of an insoluble envelope beneath the plasma membrane. The chain is Putative small proline-rich protein 2J (Sprr2j) from Mus musculus (Mouse).